We begin with the raw amino-acid sequence, 597 residues long: Protein kinase C-like 3 (597 aa).

The 84-residue stretch at 12-95 (DIKLKTRFHG…AELNIHVFVG (84 aa)) folds into the PB1 domain. Residues 127–177 (GHRFQGKRLNRRIQCFICHDYIWGIGRQGFRCVDCRLCVHKKCHRHVRTHC) form a Phorbol-ester/DAG-type zinc finger. The interval 181 to 238 (PQGPNVPVAPSSGVGSLRGGRLDTSSSTTRSGGGIDNGAFHEHEIESPGSAKDMSRST) is disordered. The region spanning 253–522 (FRLLTVIGRG…LNDMKEHDFF (270 aa)) is the Protein kinase domain. ATP contacts are provided by residues 259–267 (IGRGSYAKV) and lysine 282. Residue aspartate 377 is the Proton acceptor of the active site. The 72-residue stretch at 524 to 595 (GFIDWEALEQ…VNPLQMSRED (72 aa)) folds into the AGC-kinase C-terminal domain.

It belongs to the protein kinase superfamily. AGC Ser/Thr protein kinase family. PKC subfamily. As to quaternary structure, interaction with par-3 required for the peripheral localization of par-6 and to form a par-3/par-6/pkc-3 complex, which is activated when cdc-42 interacts with par-6. Binds avidly to the phosphotyrosine interaction domain (PID) of a novel pkc-3 adapter protein num-1, which enables tethering and targeting of pkc-3 to the cell periphery. Requires Mg(2+) as cofactor.

It is found in the cytoplasm. It localises to the cytoskeleton. The catalysed reaction is L-seryl-[protein] + ATP = O-phospho-L-seryl-[protein] + ADP + H(+). It carries out the reaction L-threonyl-[protein] + ATP = O-phospho-L-threonyl-[protein] + ADP + H(+). In terms of biological role, required for the normal progression of embryogenesis and viability of the organism. Plays an indispensable role in establishing embryonic polarity and in recruiting and maintaining par-6 to the periphery, through interaction with par-3. Required for epithelial cell polarity in the distal spermatheca. Phosphorylates serine residues of num-1. Required for the expression of antimicrobial peptide nlp-29 in response in response to fungal infection or physical injury. The sequence is that of Protein kinase C-like 3 from Caenorhabditis briggsae.